We begin with the raw amino-acid sequence, 339 residues long: Leucine-rich repeat-containing protein 75A (339 aa).

The disordered stretch occupies residues 1 to 25; sequence MGTRQTKGSLAERASPGAAPGPRRE. The segment covering 11-21 has biased composition (low complexity); sequence AERASPGAAPG. LRR repeat units follow at residues 203–216 and 228–241; these read VDSV…LTDD and LPRL…GNRL. The disordered stretch occupies residues 294 to 339; sequence LPTILELGEGPGTGEEAREGTDQQDPIGSPVTPARGQESTECVIQT. S322 is modified (phosphoserine). T325 carries the post-translational modification Phosphothreonine. Polar residues predominate over residues 330–339; sequence QESTECVIQT.

It belongs to the LRRC75 family.

The protein is Leucine-rich repeat-containing protein 75A (Lrrc75a) of Mus musculus (Mouse).